The chain runs to 68 residues: Sec-independent protein translocase protein TatA (68 aa).

Residues 1–21 (MGSFSIWHWLIVLVVVLLLFG) form a helical membrane-spanning segment. Residues 46–68 (EEAASADKTIDGKTVEHKSDEVR) form a disordered region. Positions 53–68 (KTIDGKTVEHKSDEVR) are enriched in basic and acidic residues.

This sequence belongs to the TatA/E family. In terms of assembly, the Tat system comprises two distinct complexes: a TatABC complex, containing multiple copies of TatA, TatB and TatC subunits, and a separate TatA complex, containing only TatA subunits. Substrates initially bind to the TatABC complex, which probably triggers association of the separate TatA complex to form the active translocon.

It is found in the cell inner membrane. Part of the twin-arginine translocation (Tat) system that transports large folded proteins containing a characteristic twin-arginine motif in their signal peptide across membranes. TatA could form the protein-conducting channel of the Tat system. This chain is Sec-independent protein translocase protein TatA, found in Sinorhizobium fredii (strain NBRC 101917 / NGR234).